Consider the following 280-residue polypeptide: PsbP domain-containing protein 7, chloroplastic (280 aa).

Residues 1 to 36 (MSLKPYFSLLYSSPTNVKLSNFLIAQQPSGDLKTTP) constitute a chloroplast transit peptide.

Belongs to the PsbP family.

It is found in the plastid. The protein localises to the chloroplast. This Arabidopsis thaliana (Mouse-ear cress) protein is PsbP domain-containing protein 7, chloroplastic (PPD7).